A 727-amino-acid chain; its full sequence is Elongation factor 2 (727 aa).

Positions 19-260 (DQIRNMGICA…MAIKHLPNPL (242 aa)) constitute a tr-type G domain. GTP-binding positions include 28–35 (AHIDHGKT), 94–98 (DTPGH), and 148–151 (NKVD). Residue His-603 is modified to Diphthamide.

It belongs to the TRAFAC class translation factor GTPase superfamily. Classic translation factor GTPase family. EF-G/EF-2 subfamily.

It localises to the cytoplasm. Its function is as follows. Catalyzes the GTP-dependent ribosomal translocation step during translation elongation. During this step, the ribosome changes from the pre-translocational (PRE) to the post-translocational (POST) state as the newly formed A-site-bound peptidyl-tRNA and P-site-bound deacylated tRNA move to the P and E sites, respectively. Catalyzes the coordinated movement of the two tRNA molecules, the mRNA and conformational changes in the ribosome. This chain is Elongation factor 2 (fusA), found in Methanococcus vannielii (strain ATCC 35089 / DSM 1224 / JCM 13029 / OCM 148 / SB).